A 302-amino-acid polypeptide reads, in one-letter code: MVQPGTEIKASDLTLLVITIILFAIFIVGLASVCFRWTSRQFYSQESINPFTDSDVESRTSITAVRGLDEAIINSFPTFLYSEVKERRIGIGGVECAVCICEFEDHETLRLMPECCHVFHADCVSVWLSDHSTCPLCRVDLCLQPGERSYLNPEPDLVESTNSHLFDGVTWTNRNRPSRSWSTRLSQCRVSQILISRSHSTGHSVVQPLDNLDRFTLRLPEEVRRQLTKKTVDNVAFSQARSSRRGYRSRSAGSERSVFSYQRRMHSFSDCAWSTSCGGEAVAPSKDSRRISVEQSQLDDRV.

A helical transmembrane segment spans residues 15 to 35 (LLVITIILFAIFIVGLASVCF). Residues 96-138 (CAVCICEFEDHETLRLMPECCHVFHADCVSVWLSDHSTCPLCR) form an RING-type; atypical zinc finger. Residues 279-302 (GEAVAPSKDSRRISVEQSQLDDRV) form a disordered region. Basic and acidic residues predominate over residues 286 to 302 (KDSRRISVEQSQLDDRV).

The protein belongs to the RING-type zinc finger family. ATL subfamily.

It is found in the membrane. The enzyme catalyses S-ubiquitinyl-[E2 ubiquitin-conjugating enzyme]-L-cysteine + [acceptor protein]-L-lysine = [E2 ubiquitin-conjugating enzyme]-L-cysteine + N(6)-ubiquitinyl-[acceptor protein]-L-lysine.. The protein operates within protein modification; protein ubiquitination. This Arabidopsis thaliana (Mouse-ear cress) protein is RING-H2 finger protein ATL38 (ATL38).